The following is a 214-amino-acid chain: External core antigen (214 aa).

A signal peptide spans 1–19; it reads MQLFHLCLIISCTCPTVQA. The interval 25 to 27 is HBEAG; that stretch reads GWL. The segment at 165–214 is disordered; that stretch reads NAPILSTLPETTVVRRRDRGRSPRRRTPSPRRRRSPSPRRRRSQSRESQC. Positions 178–207 are enriched in basic residues; the sequence is VRRRDRGRSPRRRTPSPRRRRSPSPRRRRS. The stretch at 186–192 is one 1; half-length repeat; sequence SPRRRTP. The tract at residues 186 to 208 is 3 X 8 AA repeats of S-P-R-R-R-R-S-[PQ]; the sequence is SPRRRTPSPRRRRSPSPRRRRSQ. Positions 186 to 214 are excised as a propeptide; that stretch reads SPRRRTPSPRRRRSPSPRRRRSQSRESQC. Tandem repeats lie at residues 193 to 200 and 201 to 208.

It belongs to the orthohepadnavirus precore antigen family. Homodimerizes. Post-translationally, phosphorylated. In terms of processing, cleaved by host furin.

It localises to the secreted. Its subcellular location is the host nucleus. In terms of biological role, may regulate immune response to the intracellular capsid in acting as a T-cell tolerogen, by having an immunoregulatory effect which prevents destruction of infected cells by cytotoxic T-cells. This immune regulation may predispose to chronicity during perinatal infections and prevent severe liver injury during adult infections. In Hepatitis B virus genotype A2 subtype adw2 (strain Rutter 1979) (HBV-A), this protein is External core antigen.